A 633-amino-acid chain; its full sequence is 1-deoxy-D-xylulose-5-phosphate synthase (633 aa).

Residues His-72 and 113-115 (GHS) each bind thiamine diphosphate. Position 144 (Asp-144) interacts with Mg(2+). Thiamine diphosphate-binding positions include 145–146 (GA), Asn-173, Tyr-284, and Glu-367. Asn-173 contacts Mg(2+).

Belongs to the transketolase family. DXPS subfamily. In terms of assembly, homodimer. It depends on Mg(2+) as a cofactor. Thiamine diphosphate is required as a cofactor.

It catalyses the reaction D-glyceraldehyde 3-phosphate + pyruvate + H(+) = 1-deoxy-D-xylulose 5-phosphate + CO2. It participates in metabolic intermediate biosynthesis; 1-deoxy-D-xylulose 5-phosphate biosynthesis; 1-deoxy-D-xylulose 5-phosphate from D-glyceraldehyde 3-phosphate and pyruvate: step 1/1. Catalyzes the acyloin condensation reaction between C atoms 2 and 3 of pyruvate and glyceraldehyde 3-phosphate to yield 1-deoxy-D-xylulose-5-phosphate (DXP). This chain is 1-deoxy-D-xylulose-5-phosphate synthase, found in Bacillus velezensis (strain DSM 23117 / BGSC 10A6 / LMG 26770 / FZB42) (Bacillus amyloliquefaciens subsp. plantarum).